Here is a 321-residue protein sequence, read N- to C-terminus: Probable arabinan endo-1,5-alpha-L-arabinosidase A (321 aa).

Residues 1–19 (MHPSTFVTTIACLAGLAHG) form the signal peptide. Asp34 functions as the Proton acceptor in the catalytic mechanism. Glu200 acts as the Proton donor in catalysis.

This sequence belongs to the glycosyl hydrolase 43 family.

The protein resides in the secreted. It carries out the reaction Endohydrolysis of (1-&gt;5)-alpha-arabinofuranosidic linkages in (1-&gt;5)-arabinans.. It functions in the pathway glycan metabolism; L-arabinan degradation. Endo-1,5-alpha-L-arabinanase involved in degradation of pectin. Its preferred substrate is linear 1,5-alpha-L-arabinan. The chain is Probable arabinan endo-1,5-alpha-L-arabinosidase A (abnA) from Aspergillus clavatus (strain ATCC 1007 / CBS 513.65 / DSM 816 / NCTC 3887 / NRRL 1 / QM 1276 / 107).